We begin with the raw amino-acid sequence, 247 residues long: Adenosylcobinamide-GDP ribazoletransferase (247 aa).

5 consecutive transmembrane segments (helical) span residues 34 to 54 (IITF…VFMV), 59 to 79 (CGVP…TGGF), 113 to 133 (GGLA…ELAL), 138 to 158 (ILAS…LLMY), and 194 to 214 (VLLP…AIFI).

The protein belongs to the CobS family. Mg(2+) serves as cofactor.

Its subcellular location is the cell inner membrane. It carries out the reaction alpha-ribazole + adenosylcob(III)inamide-GDP = adenosylcob(III)alamin + GMP + H(+). The catalysed reaction is alpha-ribazole 5'-phosphate + adenosylcob(III)inamide-GDP = adenosylcob(III)alamin 5'-phosphate + GMP + H(+). It functions in the pathway cofactor biosynthesis; adenosylcobalamin biosynthesis; adenosylcobalamin from cob(II)yrinate a,c-diamide: step 7/7. Its function is as follows. Joins adenosylcobinamide-GDP and alpha-ribazole to generate adenosylcobalamin (Ado-cobalamin). Also synthesizes adenosylcobalamin 5'-phosphate from adenosylcobinamide-GDP and alpha-ribazole 5'-phosphate. The sequence is that of Adenosylcobinamide-GDP ribazoletransferase from Escherichia coli O7:K1 (strain IAI39 / ExPEC).